A 100-amino-acid polypeptide reads, in one-letter code: Co-chaperonin GroES (100 aa).

The protein belongs to the GroES chaperonin family. Heptamer of 7 subunits arranged in a ring. Interacts with the chaperonin GroEL.

The protein localises to the cytoplasm. In terms of biological role, together with the chaperonin GroEL, plays an essential role in assisting protein folding. The GroEL-GroES system forms a nano-cage that allows encapsulation of the non-native substrate proteins and provides a physical environment optimized to promote and accelerate protein folding. GroES binds to the apical surface of the GroEL ring, thereby capping the opening of the GroEL channel. In Mycolicibacterium paratuberculosis (strain ATCC BAA-968 / K-10) (Mycobacterium paratuberculosis), this protein is Co-chaperonin GroES.